Reading from the N-terminus, the 167-residue chain is Transcription antitermination protein NusB (167 aa).

This sequence belongs to the NusB family.

In terms of biological role, involved in transcription antitermination. Required for transcription of ribosomal RNA (rRNA) genes. Binds specifically to the boxA antiterminator sequence of the ribosomal RNA (rrn) operons. The chain is Transcription antitermination protein NusB from Nitrosomonas europaea (strain ATCC 19718 / CIP 103999 / KCTC 2705 / NBRC 14298).